The chain runs to 89 residues: UPF0298 protein GK1096 (89 aa).

This sequence belongs to the UPF0298 family.

Its subcellular location is the cytoplasm. The polypeptide is UPF0298 protein GK1096 (Geobacillus kaustophilus (strain HTA426)).